A 240-amino-acid polypeptide reads, in one-letter code: Protein GUCD1 (240 aa).

This is Protein GUCD1 (GUCD1) from Homo sapiens (Human).